The sequence spans 91 residues: MALRHKSAQKRHRQSLKRRMLNRSRKSTIKTFTKQAVAAATTGENLAAAQSKAESLIDKAAKGSTLHKNAAARKKSRLAKAINRVKAAQQS.

Disordered stretches follow at residues 1–26 (MALRHKSAQKRHRQSLKRRMLNRSRK) and 67–91 (HKNAAARKKSRLAKAINRVKAAQQS).

It belongs to the bacterial ribosomal protein bS20 family.

Functionally, binds directly to 16S ribosomal RNA. The chain is Small ribosomal subunit protein bS20 from Deinococcus deserti (strain DSM 17065 / CIP 109153 / LMG 22923 / VCD115).